A 373-amino-acid chain; its full sequence is MTAQNPNLAALSAAGVSVWLDDLSRDRLRSGNLQELIDTKSVVGVTTNPSIFQKALSEGHTYDAQIAELAARGADVDATIRTVTTDDVRSACDVLVPQWEDSDGVDGRVSIEVDPRLAHETEKTIQQAIELWKIVDRPNLFIKIPATKAGLPAISAVLAEGISVNVTLIFSVQRYREVMDAYLTGMEKARQAGHSLSKIHSVASFFVSRVDTEIDKRLDRIGSRQALELRGQAGVANARLAYATYREVFEDSDRYRSLKVDGARVQRPLWASTGVKNPDYSDTLYVTELVAPHTVNTMPEKTIDAVADHGVIQGDTVTGTASDAQAVFDQLGAIGIDLTDVFAVLEEEGVRKFEASWNELLQETRAHLDTAAQ.

K143 (schiff-base intermediate with substrate) is an active-site residue.

This sequence belongs to the transaldolase family. Type 2 subfamily.

It localises to the cytoplasm. The enzyme catalyses D-sedoheptulose 7-phosphate + D-glyceraldehyde 3-phosphate = D-erythrose 4-phosphate + beta-D-fructose 6-phosphate. It functions in the pathway carbohydrate degradation; pentose phosphate pathway; D-glyceraldehyde 3-phosphate and beta-D-fructose 6-phosphate from D-ribose 5-phosphate and D-xylulose 5-phosphate (non-oxidative stage): step 2/3. Transaldolase is important for the balance of metabolites in the pentose-phosphate pathway. This is Transaldolase (tal) from Mycobacterium tuberculosis (strain ATCC 25618 / H37Rv).